The primary structure comprises 89 residues: MANHKSAIKRHRQNLLARARNRAVKTRVRNVIKAVRAALIGGDAAAAETALLTATKVLDKAATKKIIHWKTAARNISRLSTAVNKAKSA.

The protein belongs to the bacterial ribosomal protein bS20 family.

Its function is as follows. Binds directly to 16S ribosomal RNA. The protein is Small ribosomal subunit protein bS20 of Solidesulfovibrio magneticus (strain ATCC 700980 / DSM 13731 / RS-1) (Desulfovibrio magneticus).